We begin with the raw amino-acid sequence, 282 residues long: High mobility group nucleosome-binding domain-containing protein 5 (282 aa).

A disordered region spans residues 1-282 (MPKRKAAGQG…GKKEEPQSIV (282 aa)). T31 carries the post-translational modification Phosphothreonine. A compositionally biased stretch (basic residues) spans 37-46 (KRTSSSRKMK). Residue K67 forms a Glycyl lysine isopeptide (Lys-Gly) (interchain with G-Cter in SUMO2) linkage. Y76 carries the post-translational modification Phosphotyrosine. Positions 81–119 (KNGEAKITEAPASEKEIVEVKEENIEDATEKGGEKKEAV) are enriched in basic and acidic residues. S93 carries the post-translational modification Phosphoserine. K101 is covalently cross-linked (Glycyl lysine isopeptide (Lys-Gly) (interchain with G-Cter in SUMO1); alternate). K101 is covalently cross-linked (Glycyl lysine isopeptide (Lys-Gly) (interchain with G-Cter in SUMO2); alternate). A Glycyl lysine isopeptide (Lys-Gly) (interchain with G-Cter in SUMO2) cross-link involves residue K124. A compositionally biased stretch (acidic residues) spans 125-138 (NEEEDQKEDEEDQN). Composition is skewed to basic and acidic residues over residues 139-152 (EEKG…KDEK) and 158-256 (KEDK…KEDL). Residues 257–270 (KEEEEGKEEDEIKE) are compositionally biased toward acidic residues. Basic and acidic residues predominate over residues 271 to 282 (DDGKKEEPQSIV).

Belongs to the HMGN family. As to expression, ubiquitously expressed.

It is found in the nucleus. Its function is as follows. Preferentially binds to euchromatin and modulates cellular transcription by counteracting linker histone-mediated chromatin compaction. The polypeptide is High mobility group nucleosome-binding domain-containing protein 5 (HMGN5) (Homo sapiens (Human)).